A 137-amino-acid chain; its full sequence is Small ribosomal subunit protein uS12 (137 aa).

Disordered stretches follow at residues 1 to 21 and 34 to 57; these read MPTINQLVRKPRKSKIEKSDS and VHTKIAAPQKRGVATRVGTMTPKK. Residue aspartate 102 is modified to 3-methylthioaspartic acid.

Belongs to the universal ribosomal protein uS12 family. As to quaternary structure, part of the 30S ribosomal subunit. Contacts proteins S8 and S17. May interact with IF1 in the 30S initiation complex.

With S4 and S5 plays an important role in translational accuracy. Its function is as follows. Interacts with and stabilizes bases of the 16S rRNA that are involved in tRNA selection in the A site and with the mRNA backbone. Located at the interface of the 30S and 50S subunits, it traverses the body of the 30S subunit contacting proteins on the other side and probably holding the rRNA structure together. The combined cluster of proteins S8, S12 and S17 appears to hold together the shoulder and platform of the 30S subunit. This chain is Small ribosomal subunit protein uS12, found in Streptococcus uberis (strain ATCC BAA-854 / 0140J).